The following is a 200-amino-acid chain: Dephospho-CoA kinase (200 aa).

Positions 3 to 200 (IFGLTGGIGS…LNVNNKCNMD (198 aa)) constitute a DPCK domain. Residue 11–16 (GSGKSL) coordinates ATP.

This sequence belongs to the CoaE family.

It is found in the cytoplasm. It carries out the reaction 3'-dephospho-CoA + ATP = ADP + CoA + H(+). The protein operates within cofactor biosynthesis; coenzyme A biosynthesis; CoA from (R)-pantothenate: step 5/5. Functionally, catalyzes the phosphorylation of the 3'-hydroxyl group of dephosphocoenzyme A to form coenzyme A. The protein is Dephospho-CoA kinase of Ehrlichia canis (strain Jake).